Here is a 449-residue protein sequence, read N- to C-terminus: Chromosomal replication initiator protein DnaA (449 aa).

A domain I, interacts with DnaA modulators region spans residues 1-71 (MPSSLWKHCL…LLSHYSSGRI (71 aa)). The interval 71-112 (IEKALLEVGSCSLQPQPHIQAVELTSKSARSSSRVVDRIPES) is domain II. A domain III, AAA+ region region spans residues 113 to 329 (RLNKNYTFDS…GALRRVIAYS (217 aa)). The ATP site is built by glycine 157, glycine 159, lysine 160, and threonine 161. The tract at residues 330-449 (RFTHRPITME…YHNLLKKLST (120 aa)) is domain IV, binds dsDNA.

This sequence belongs to the DnaA family. As to quaternary structure, oligomerizes as a right-handed, spiral filament on DNA at oriC.

The protein resides in the cytoplasm. Its function is as follows. Plays an essential role in the initiation and regulation of chromosomal replication. ATP-DnaA binds to the origin of replication (oriC) to initiate formation of the DNA replication initiation complex once per cell cycle. Binds the DnaA box (a 9 base pair repeat at the origin) and separates the double-stranded (ds)DNA. Forms a right-handed helical filament on oriC DNA; dsDNA binds to the exterior of the filament while single-stranded (ss)DNA is stabiized in the filament's interior. The ATP-DnaA-oriC complex binds and stabilizes one strand of the AT-rich DNA unwinding element (DUE), permitting loading of DNA polymerase. After initiation quickly degrades to an ADP-DnaA complex that is not apt for DNA replication. Binds acidic phospholipids. The sequence is that of Chromosomal replication initiator protein DnaA from Nitrosococcus oceani (strain ATCC 19707 / BCRC 17464 / JCM 30415 / NCIMB 11848 / C-107).